A 132-amino-acid chain; its full sequence is Small ribosomal subunit protein uS8 (132 aa).

It belongs to the universal ribosomal protein uS8 family. As to quaternary structure, part of the 30S ribosomal subunit. Contacts proteins S5 and S12.

Its function is as follows. One of the primary rRNA binding proteins, it binds directly to 16S rRNA central domain where it helps coordinate assembly of the platform of the 30S subunit. The sequence is that of Small ribosomal subunit protein uS8 from Bacillus licheniformis (strain ATCC 14580 / DSM 13 / JCM 2505 / CCUG 7422 / NBRC 12200 / NCIMB 9375 / NCTC 10341 / NRRL NRS-1264 / Gibson 46).